Consider the following 139-residue polypeptide: MSGLSRIGVAIDSDLLDKFDSLIGQRGYTNRSEAFRDLIRDELVEKTWESPESQVVGTVTLVYDHHVRLLNEKLTGIQHDFHHSILSTLHVHLDHDNCLEVLVVRGRSADVRKVADVLISTKGVKHGRLTITTTGAEMK.

His79, His90, His92, and Cys98 together coordinate Ni(2+).

This sequence belongs to the transcriptional regulatory CopG/NikR family. Requires Ni(2+) as cofactor.

Transcriptional regulator. The sequence is that of Putative nickel-responsive regulator from Solibacter usitatus (strain Ellin6076).